A 385-amino-acid chain; its full sequence is Hemagglutinin-esterase (385 aa).

The first 11 residues, 1 to 11, serve as a signal peptide directing secretion; that stretch reads MLIIFLFFNFC. Residues 1-121 form an esterase domain 1 region; the sequence is MLIIFLFFNF…SNDVWIFNKV (121 aa). The Virion surface portion of the chain corresponds to 12–361; it reads YGFNEPLNVV…LNCFYDPLPI (350 aa). Catalysis depends on serine 34, which acts as the Nucleophile. An intrachain disulfide couples cysteine 38 to cysteine 59. N-linked (GlcNAc...) asparagine; by host glycans are attached at residues asparagine 83, asparagine 110, asparagine 145, asparagine 171, asparagine 196, and asparagine 251. An intrachain disulfide couples cysteine 107 to cysteine 155. Residues 122–239 form a receptor binding region; it reads RFYRALYSNM…GSYKIFSTGF (118 aa). Disulfide bonds link cysteine 183–cysteine 249 and cysteine 191–cysteine 222. The interval 240 to 352 is esterase domain 2; sequence VLSIPTKALC…NCPTSAYIKL (113 aa). A disulfide bond links cysteine 280 and cysteine 285. Asparagine 289 carries an N-linked (GlcNAc...) asparagine; by host glycan. Residues aspartate 299 and histidine 302 each act as charge relay system in the active site. A disulfide bridge links cysteine 320 with cysteine 344. Residue asparagine 331 is glycosylated (N-linked (GlcNAc...) asparagine; by host). The chain crosses the membrane as a helical span at residues 362-382; the sequence is ILQGILLFLALLFIVFLLFLV. Residues 383–385 lie on the Intravirion side of the membrane; it reads YHG.

Belongs to the influenza type C/coronaviruses hemagglutinin-esterase family. Homodimer; disulfide-linked. Forms a complex with the M protein in the pre-Golgi. Associates then with S-M complex to form a ternary complex S-M-HE. Post-translationally, N-glycosylated in the host RER.

It is found in the virion membrane. The protein localises to the host cell membrane. It catalyses the reaction N-acetyl-9-O-acetylneuraminate + H2O = N-acetylneuraminate + acetate + H(+). The catalysed reaction is N-acetyl-4-O-acetylneuraminate + H2O = N-acetylneuraminate + acetate + H(+). Its function is as follows. Structural protein that makes short spikes at the surface of the virus. Contains receptor binding and receptor-destroying activities. Mediates de-O-acetylation of N-acetyl-4-O-acetylneuraminic acid, which is probably the receptor determinant recognized by the virus on the surface of erythrocytes and susceptible cells. This receptor-destroying activity is important for virus release as it probably helps preventing self-aggregation and ensures the efficient spread of the progeny virus from cell to cell. May serve as a secondary viral attachment protein for initiating infection, the spike protein being the major one. May become a target for both the humoral and the cellular branches of the immune system. This chain is Hemagglutinin-esterase, found in Human coronavirus HKU1 (isolate N2) (HCoV-HKU1).